A 381-amino-acid chain; its full sequence is Creatine kinase M-type (381 aa).

A Phosphagen kinase N-terminal domain is found at 11 to 98; the sequence is KLNFKAEEEY…FDPIIQDRHG (88 aa). Residues 125–367 form the Phosphagen kinase C-terminal domain; the sequence is YVLSSRVRTG…KLMVEMEKKL (243 aa). Residue 128-132 participates in ATP binding; the sequence is SSRVR. Ser164 is modified (phosphoserine). Thr166 bears the Phosphothreonine mark. The residue at position 178 (Ser178) is a Phosphoserine. Thr180 carries the phosphothreonine modification. Residue His191 coordinates ATP. Ser199 carries the phosphoserine modification. Residues Arg236 and Arg292 each contribute to the ATP site. A phosphothreonine mark is found at Thr313 and Thr322. Residues 320-325 and Asp335 each bind ATP; that span reads RGTGGV. Ser372 is subject to Phosphoserine.

Belongs to the ATP:guanido phosphotransferase family. As to quaternary structure, dimer of identical or non-identical chains, which can be either B (brain type) or M (muscle type). With MM being the major form in skeletal muscle and myocardium, MB existing in myocardium, and BB existing in many tissues, especially brain.

It localises to the cytoplasm. It catalyses the reaction creatine + ATP = N-phosphocreatine + ADP + H(+). Reversibly catalyzes the transfer of phosphate between ATP and various phosphogens (e.g. creatine phosphate). Creatine kinase isoenzymes play a central role in energy transduction in tissues with large, fluctuating energy demands, such as skeletal muscle, heart, brain and spermatozoa. The chain is Creatine kinase M-type (CKM) from Bos taurus (Bovine).